The following is a 283-amino-acid chain: Polyamine aminopropyltransferase (283 aa).

One can recognise a PABS domain in the interval 5–238 (TTWIDEYHKG…GIWSWTFASS (234 aa)). Gln32 contacts S-methyl-5'-thioadenosine. Spermidine contacts are provided by His63 and Asp87. S-methyl-5'-thioadenosine contacts are provided by residues Glu107 and 139–140 (DG). Asp158 (proton acceptor) is an active-site residue. 158 to 161 (DCSD) serves as a coordination point for spermidine.

It belongs to the spermidine/spermine synthase family. In terms of assembly, homodimer or homotetramer.

Its subcellular location is the cytoplasm. It carries out the reaction S-adenosyl 3-(methylsulfanyl)propylamine + putrescine = S-methyl-5'-thioadenosine + spermidine + H(+). It functions in the pathway amine and polyamine biosynthesis; spermidine biosynthesis; spermidine from putrescine: step 1/1. Its function is as follows. Catalyzes the irreversible transfer of a propylamine group from the amino donor S-adenosylmethioninamine (decarboxy-AdoMet) to putrescine (1,4-diaminobutane) to yield spermidine. The chain is Polyamine aminopropyltransferase from Prochlorococcus marinus (strain AS9601).